The chain runs to 254 residues: MKFFVLTIFPQFFEGFINTGIVSRAVKKGIVDIKSVDLRDFTEDKHRTVDDVVYGGGPGMLLKPEPIFKAYDSITEKGHKPYVLITEPWGRKFDQKFAEELSKKEEIMIICGRYEGVDERVKSIVDEEVSIGDFILSGGEPAALVIMDAVIRLIPGVVGDSESLNADSFSNDGLLGYPNYTRPAEYRGMKVPEVLRSGNHKLIKLWRRWKQIEKTAVRKPELLKKADLSDSDKKIIDAIKKGLSFEDFLKKYKV.

Residues glycine 112 and isoleucine 131–leucine 136 each bind S-adenosyl-L-methionine.

It belongs to the RNA methyltransferase TrmD family. Homodimer.

The protein resides in the cytoplasm. It catalyses the reaction guanosine(37) in tRNA + S-adenosyl-L-methionine = N(1)-methylguanosine(37) in tRNA + S-adenosyl-L-homocysteine + H(+). Its function is as follows. Specifically methylates guanosine-37 in various tRNAs. This Persephonella marina (strain DSM 14350 / EX-H1) protein is tRNA (guanine-N(1)-)-methyltransferase.